Consider the following 107-residue polypeptide: Iron-binding protein IscA (107 aa).

Residues Cys35, Cys99, and Cys101 each coordinate Fe cation.

The protein belongs to the HesB/IscA family. In terms of assembly, homodimer; may form tetramers and higher multimers. Fe cation is required as a cofactor.

Functionally, is able to transfer iron-sulfur clusters to apo-ferredoxin. Multiple cycles of [2Fe2S] cluster formation and transfer are observed, suggesting that IscA acts catalytically. Recruits intracellular free iron so as to provide iron for the assembly of transient iron-sulfur cluster in IscU in the presence of IscS, L-cysteine and the thioredoxin reductase system TrxA/TrxB. The protein is Iron-binding protein IscA of Klebsiella pneumoniae (strain 342).